A 255-amino-acid chain; its full sequence is tRNA pseudouridine synthase B (255 aa).

The active-site Nucleophile is Asp-58.

Belongs to the pseudouridine synthase TruB family. Type 1 subfamily.

The enzyme catalyses uridine(55) in tRNA = pseudouridine(55) in tRNA. Functionally, responsible for synthesis of pseudouridine from uracil-55 in the psi GC loop of transfer RNAs. This is tRNA pseudouridine synthase B from Chlorobium chlorochromatii (strain CaD3).